The chain runs to 374 residues: Chaperone protein DnaJ (374 aa).

One can recognise a J domain in the interval 5–70; the sequence is DYYEVLGISR…SKRAAYDQFG (66 aa). The segment at 129–207 adopts a CR-type zinc-finger fold; that stretch reads GKTVKINIPG…CHGQGRVRQE (79 aa). Cysteine 142, cysteine 145, cysteine 159, cysteine 162, cysteine 181, cysteine 184, cysteine 195, and cysteine 198 together coordinate Zn(2+). CXXCXGXG motif repeat units lie at residues 142 to 149, 159 to 166, 181 to 188, and 195 to 202; these read CEACDGSG, CGTCQGMG, CPTCRGSG, and CKSCHGQG. Residues 216 to 238 form a disordered region; it reads PGVDTGDRIRLSGEGEMGVDGGP.

Belongs to the DnaJ family. Homodimer. It depends on Zn(2+) as a cofactor.

The protein localises to the cytoplasm. Its function is as follows. Participates actively in the response to hyperosmotic and heat shock by preventing the aggregation of stress-denatured proteins and by disaggregating proteins, also in an autonomous, DnaK-independent fashion. Unfolded proteins bind initially to DnaJ; upon interaction with the DnaJ-bound protein, DnaK hydrolyzes its bound ATP, resulting in the formation of a stable complex. GrpE releases ADP from DnaK; ATP binding to DnaK triggers the release of the substrate protein, thus completing the reaction cycle. Several rounds of ATP-dependent interactions between DnaJ, DnaK and GrpE are required for fully efficient folding. Also involved, together with DnaK and GrpE, in the DNA replication of plasmids through activation of initiation proteins. The chain is Chaperone protein DnaJ from Marinobacter nauticus (strain ATCC 700491 / DSM 11845 / VT8) (Marinobacter aquaeolei).